A 94-amino-acid polypeptide reads, in one-letter code: Large ribosomal subunit protein bL25 (94 aa).

It belongs to the bacterial ribosomal protein bL25 family. In terms of assembly, part of the 50S ribosomal subunit; part of the 5S rRNA/L5/L18/L25 subcomplex. Contacts the 5S rRNA. Binds to the 5S rRNA independently of L5 and L18.

Its function is as follows. This is one of the proteins that binds to the 5S RNA in the ribosome where it forms part of the central protuberance. This chain is Large ribosomal subunit protein bL25, found in Shigella boydii serotype 4 (strain Sb227).